Reading from the N-terminus, the 488-residue chain is MAGDVEGFSSSIHDTSVSAGFRALYEEGLLLDVTLVIEDHQFQAHKALLATQSDYFRIMFTADMRERDQDKIHLKGLTATGFSHVLQFMYYGTIELSMNTVHEILQAAMYVQLIEVVKFCCSFLLAKICLENCAEIMRLLDDFSVNIEGVREKLDSFLLENFVPLMSRPDFLSYLSFEKLMSYLDNDHLSRFPEIELYEAVQAWLRHDRRRWRHTDTIIQNIRFCLMTPSSVFEKVKTSEFYRYSRQLRHEVDQAMNYFHSVHQQPLMEMKSNKIRSAKPQTAVFRGMIGHSMVNSKILLLHKPRVWWELEGPQVPLRPDCLAIVNNFVFLLGGEELGPDGEFHASSKVFRYDPRQNTWLRMADMSVPRSEFAVGVIGRYVYAVAGRTRDETFYSTERYDITEDKWEFVDPYPVNKYGHEGTVLGNKLYITGGITSSSTSKQVCVFDPSKEGTVEQRTRRTQVATNCWENKCKMNYARCFHKMISYNA.

A BTB domain is found at 31-98 (LDVTLVIEDH…MYYGTIELSM (68 aa)). Positions 133 to 237 (CAEIMRLLDD…TPSSVFEKVK (105 aa)) constitute a BACK domain. 3 Kelch repeats span residues 328-379 (FVFL…VIGR), 381-426 (VYAV…VLGN), and 428-473 (LYIT…NKCK).

As to quaternary structure, homodimer. Interacts with CUL3.

The protein localises to the nucleus. Its pathway is protein modification; protein ubiquitination. Substrate-specific adapter for CUL3 E3 ubiquitin-protein ligase complex. The protein is Kelch-like protein 15 (KLHL15) of Gallus gallus (Chicken).